Reading from the N-terminus, the 293-residue chain is Prohibitin-2 (293 aa).

Residues 21–41 (FGGGFGLLALGGVGLLALSSL) traverse the membrane as a helical; Signal-anchor for type II membrane protein segment. The stretch at 190–235 (GREYAAAIEAKQVAQQEAERARFLVEKALQDKRSIIVKAEGEAQSA) forms a coiled coil.

Belongs to the prohibitin family. The mitochondrial prohibitin complex consists of two subunits (PHB1 and PHB2), assembled into a membrane-associated ring-shaped supercomplex of approximately 1 mDa.

The protein resides in the mitochondrion inner membrane. The protein localises to the cytoplasm. It localises to the nucleus. It is found in the cell membrane. In terms of biological role, protein with pleiotropic attributes mediated in a cell-compartment- and tissue-specific manner, which include the plasma membrane-associated cell signaling functions, mitochondrial chaperone, and transcriptional co-regulator of transcription factors and sex steroid hormones in the nucleus. In the mitochondria, together with PHB, forms large ring complexes (prohibitin complexes) in the inner mitochondrial membrane (IMM) and functions as a chaperone protein that stabilizes mitochondrial respiratory enzymes and maintains mitochondrial integrity in the IMM, which is required for mitochondrial morphogenesis, neuronal survival, and normal lifespan. Its function is as follows. In the nucleus, serves as transcriptional co-regulator. This chain is Prohibitin-2 (phbB), found in Dictyostelium discoideum (Social amoeba).